We begin with the raw amino-acid sequence, 193 residues long: Holliday junction branch migration complex subunit RuvA (193 aa).

Residues 1 to 64 form a domain I region; sequence MIGRIAGVLL…EDAHLLYGFL (64 aa). A domain II region spans residues 65–139; that stretch reads TPQERSTFRE…GKLGADLGAM (75 aa). The interval 139–143 is flexible linker; the sequence is MAGAA. Residues 144 to 193 form a domain III region; sequence SQSDHASDILNALLALGYSEKEGLAAIKNVPAGTGVSEGIKLALKALSKA.

This sequence belongs to the RuvA family. Homotetramer. Forms an RuvA(8)-RuvB(12)-Holliday junction (HJ) complex. HJ DNA is sandwiched between 2 RuvA tetramers; dsDNA enters through RuvA and exits via RuvB. An RuvB hexamer assembles on each DNA strand where it exits the tetramer. Each RuvB hexamer is contacted by two RuvA subunits (via domain III) on 2 adjacent RuvB subunits; this complex drives branch migration. In the full resolvosome a probable DNA-RuvA(4)-RuvB(12)-RuvC(2) complex forms which resolves the HJ.

It is found in the cytoplasm. In terms of biological role, the RuvA-RuvB-RuvC complex processes Holliday junction (HJ) DNA during genetic recombination and DNA repair, while the RuvA-RuvB complex plays an important role in the rescue of blocked DNA replication forks via replication fork reversal (RFR). RuvA specifically binds to HJ cruciform DNA, conferring on it an open structure. The RuvB hexamer acts as an ATP-dependent pump, pulling dsDNA into and through the RuvAB complex. HJ branch migration allows RuvC to scan DNA until it finds its consensus sequence, where it cleaves and resolves the cruciform DNA. This Paraburkholderia phymatum (strain DSM 17167 / CIP 108236 / LMG 21445 / STM815) (Burkholderia phymatum) protein is Holliday junction branch migration complex subunit RuvA.